The sequence spans 399 residues: (R)-2-hydroxy-4-methylpentanoate CoA-transferase (399 aa).

Residue Asp171 is the Nucleophile of the active site.

This sequence belongs to the CoA-transferase III family. In terms of assembly, homodimer.

It carries out the reaction 4-methylpentanoyl-CoA + (2R)-hydroxy-4-methylpentanoate = (R)-2-hydroxy-4-methylpentanoyl-CoA + 4-methylpentanoate. Its pathway is amino-acid degradation; L-leucine degradation. Its function is as follows. Involved in the reductive branch of L-leucine fermentation. Catalyzes the transfer of the CoA moiety from 4-methylpentanoyl-CoA (isocaproyl-CoA) to (R)-2-hydroxy-4-methylpentanoate ((R)-2-hydroxyisocaproate), leading to the formation of (R)-2-hydroxy-4-methylpentanoyl-CoA. Other CoA thioesters, such as acetyl-CoA or butyryl-CoA, are not accepted as substrates. This is (R)-2-hydroxy-4-methylpentanoate CoA-transferase from Clostridioides difficile (Peptoclostridium difficile).